We begin with the raw amino-acid sequence, 125 residues long: Ribosome-binding factor A (125 aa).

It belongs to the RbfA family. Monomer. Binds 30S ribosomal subunits, but not 50S ribosomal subunits or 70S ribosomes.

The protein resides in the cytoplasm. Functionally, one of several proteins that assist in the late maturation steps of the functional core of the 30S ribosomal subunit. Associates with free 30S ribosomal subunits (but not with 30S subunits that are part of 70S ribosomes or polysomes). Required for efficient processing of 16S rRNA. May interact with the 5'-terminal helix region of 16S rRNA. The chain is Ribosome-binding factor A from Carboxydothermus hydrogenoformans (strain ATCC BAA-161 / DSM 6008 / Z-2901).